Consider the following 168-residue polypeptide: Small ribosomal subunit protein uS9 (168 aa).

A compositionally biased stretch (low complexity) spans 1 to 29 (MAQNEELTAEAVEAEETLTSYTSESTSAE). The interval 1–36 (MAQNEELTAEAVEAEETLTSYTSESTSAEDAPKKER) is disordered.

Belongs to the universal ribosomal protein uS9 family.

This is Small ribosomal subunit protein uS9 from Paenarthrobacter aurescens (strain TC1).